The primary structure comprises 416 residues: Ena/VASP-like protein (416 aa).

Positions 1 to 112 (MSEQSICQAR…NAMLFALNIM (112 aa)) constitute a WH1 domain. Residues 114–129 (SQEGGPSSQRQVQNGP) show a composition bias toward polar residues. Disordered regions lie at residues 114 to 133 (SQEG…SPDE) and 141 to 369 (VMEQ…PAGS). The residue at position 130 (S130) is a Phosphoserine. The segment covering 141 to 157 (VMEQHQQQRQESLERRT) has biased composition (basic and acidic residues). Residues 169–180 (PSSAASAPVSCS) show a composition bias toward low complexity. The segment covering 181–206 (GPPPPPPPPVPPPPTGATPPPPPPLP) has biased composition (pro residues). The segment at 222-242 (GLAAAIAGAKLRRVQRPEDAS) is EVH2 block A. The EVH2 stretch occupies residues 222–413 (GLAAAIAGAK…DAIRQELSGI (192 aa)). A KLKR motif is present at residues 231–234 (KLRR). Over residues 242-253 (SGGSSPSGTSKS) the composition is skewed to low complexity. 2 positions are modified to phosphoserine: S246 and S259. Residues 265–282 (GGLMEEMNKLLAKRRKAA) form an EVH2 block B region. Residues 299–320 (EDPSTSPSPGTRAASQPPNSSE) are compositionally biased toward polar residues. 8 positions are modified to phosphoserine: S304, S306, S329, S331, S341, S349, S354, and S369. Positions 321–331 (AGRKPWERSNS) are enriched in basic and acidic residues. The tract at residues 342-362 (RTPSVAKSPEAKSPLQSQPHS) is required for interaction with ZDHHC17. Residues 379 to 413 (DLDRMKQEILEEVVRELHKVKEEIIDAIRQELSGI) are EVH2 block C.

Belongs to the Ena/VASP family. Homotetramer. Binds to the SH3 domains of ABL1, LYN and SRC. Also binds to profilin, with preference for isoform IIa of PFN2, and the WW domain of APBB1/FE65. Binds to SEMA6A. Interacts, via the Pro-rich region, with the C-terminal SH3 domain of DNMBP. Interacts with RAPH1. Binds, via the EVH1 domain, the Pro-rich domain of Listeria monocytogenes actA. Binds, via the EVH1 domain, the Pro-rich domain of ZYX. Interacts with FYB1. Interacts with ZDHHC17. Phosphorylated by PKA; phosphorylation abolishes binding to SH3 domains of ABL and SRC.

It localises to the cytoplasm. It is found in the cytoskeleton. The protein resides in the stress fiber. The protein localises to the cell projection. Its subcellular location is the lamellipodium. Its function is as follows. Ena/VASP proteins are actin-associated proteins involved in a range of processes dependent on cytoskeleton remodeling and cell polarity such as axon guidance and lamellipodial and filopodial dynamics in migrating cells. EVL enhances actin nucleation and polymerization. The sequence is that of Ena/VASP-like protein (EVL) from Homo sapiens (Human).